A 403-amino-acid chain; its full sequence is MGSLSDSTPLMKDVQGIRKAQKADGTATVMAIGTAHPPHIISQDSYADFYFRVTNSEHKVELKKKFDRICKKTMIGKRYFNFDEEFLKKYPNITSFDKPSLNDRHDICIPGVPALGAEAAVKAIEEWGRPKSEITHLVFCTSGGVDMPSADFQCAKLLGLRTNVNKYCIYMQGCYAGGTVMRYAKDLAENNRGARVLMVCAELTIIALRGPNDSHIDNAIGNSLFGDGAAALIVGSDPIIGVEKPMFEIVCAKQTVIPNSEEVIHLHLRESGLMFYMTKDSAATISNNIEACLVDVFKSVGMTPPEDWNSLFWIPHPGGRAILDQVEAKLKLRPEKFSATRTVLWDYGNMISACVLYILDEMRRKSAAEGLETYGEGLEWGVLLGFGPGMTIETILLHSLPPV.

Residue cysteine 174 is part of the active site. Residues serine 281 and 318-321 each bind CoA; that span reads GGRA.

The protein belongs to the thiolase-like superfamily. Chalcone/stilbene synthases family. Homodimer.

The protein operates within secondary metabolite biosynthesis; flavonoid biosynthesis. Catalyzes the iterative condensations of 6, 7 or 8 molecules of malonyl-CoA to produce various aromatic polyketides. Produces the heptaketide aloesone, the aglycone of aloesin, from 7 molecules of malonyl-CoA as a major product. Also able to produce a hexaketide pyrone, a heptaketide 6-(2-acetyl-3,5-dihydroxybenzyl)-4-hydroxy-2-pyrone, a novel heptaketide 6-(2-(2,4-dihydroxy-6-methylphenyl)-2-oxoethyl)-4-hydroxy-2-pyrone and octaketides SEK4/SEK4b. The chain is Aloesone synthase (PKS3) from Aloe arborescens (Kidachi aloe).